The primary structure comprises 203 residues: LexA repressor (203 aa).

The segment at residues V28–K48 is a DNA-binding region (H-T-H motif). Catalysis depends on for autocatalytic cleavage activity residues S122 and K159.

Belongs to the peptidase S24 family. Homodimer.

The enzyme catalyses Hydrolysis of Ala-|-Gly bond in repressor LexA.. Its function is as follows. Represses a number of genes involved in the response to DNA damage (SOS response), including recA and lexA. In the presence of single-stranded DNA, RecA interacts with LexA causing an autocatalytic cleavage which disrupts the DNA-binding part of LexA, leading to derepression of the SOS regulon and eventually DNA repair. This Desulfatibacillum aliphaticivorans protein is LexA repressor.